The following is a 338-amino-acid chain: Ketol-acid reductoisomerase (NADP(+)) (338 aa).

One can recognise a KARI N-terminal Rossmann domain in the interval 1–181 (MKVFYDKDCD…GGGRAGIIET (181 aa)). NADP(+)-binding positions include 24 to 27 (YGSQ), R47, and S52. H107 is an active-site residue. Residue G133 participates in NADP(+) binding. The region spanning 182–327 (NFREETETDL…AKLRAMMPWI (146 aa)) is the KARI C-terminal knotted domain. Residues D190, E194, E226, and E230 each coordinate Mg(2+). Residue S251 participates in substrate binding.

It belongs to the ketol-acid reductoisomerase family. Mg(2+) serves as cofactor.

It catalyses the reaction (2R)-2,3-dihydroxy-3-methylbutanoate + NADP(+) = (2S)-2-acetolactate + NADPH + H(+). The enzyme catalyses (2R,3R)-2,3-dihydroxy-3-methylpentanoate + NADP(+) = (S)-2-ethyl-2-hydroxy-3-oxobutanoate + NADPH + H(+). Its pathway is amino-acid biosynthesis; L-isoleucine biosynthesis; L-isoleucine from 2-oxobutanoate: step 2/4. It participates in amino-acid biosynthesis; L-valine biosynthesis; L-valine from pyruvate: step 2/4. Functionally, involved in the biosynthesis of branched-chain amino acids (BCAA). Catalyzes an alkyl-migration followed by a ketol-acid reduction of (S)-2-acetolactate (S2AL) to yield (R)-2,3-dihydroxy-isovalerate. In the isomerase reaction, S2AL is rearranged via a Mg-dependent methyl migration to produce 3-hydroxy-3-methyl-2-ketobutyrate (HMKB). In the reductase reaction, this 2-ketoacid undergoes a metal-dependent reduction by NADPH to yield (R)-2,3-dihydroxy-isovalerate. The sequence is that of Ketol-acid reductoisomerase (NADP(+)) from Herminiimonas arsenicoxydans.